The sequence spans 203 residues: uncharacterized protein (203 aa).

This is an uncharacterized protein from Pasteurella multocida (strain Pm70).